We begin with the raw amino-acid sequence, 460 residues long: Argininosuccinate lyase (460 aa).

The protein belongs to the lyase 1 family. Argininosuccinate lyase subfamily.

It localises to the cytoplasm. The enzyme catalyses 2-(N(omega)-L-arginino)succinate = fumarate + L-arginine. It participates in amino-acid biosynthesis; L-arginine biosynthesis; L-arginine from L-ornithine and carbamoyl phosphate: step 3/3. In Lawsonia intracellularis (strain PHE/MN1-00), this protein is Argininosuccinate lyase.